We begin with the raw amino-acid sequence, 96 residues long: Pollen allergen Dac g 3 (96 aa).

An Expansin-like CBD domain is found at 14–94 (KKLVLDIKYT…AFKIGTTYTP (81 aa)).

The protein belongs to the expansin family. Expansin B subfamily.

Its subcellular location is the secreted. The chain is Pollen allergen Dac g 3 from Dactylis glomerata (Orchard grass).